A 345-amino-acid chain; its full sequence is tRNA N6-adenosine threonylcarbamoyltransferase (345 aa).

Fe cation contacts are provided by His-111 and His-115. Residues 136 to 140 (LVSGG), Asp-169, Gly-182, and Asn-279 each bind substrate. Position 307 (Asp-307) interacts with Fe cation.

This sequence belongs to the KAE1 / TsaD family. Fe(2+) is required as a cofactor.

The protein localises to the cytoplasm. The enzyme catalyses L-threonylcarbamoyladenylate + adenosine(37) in tRNA = N(6)-L-threonylcarbamoyladenosine(37) in tRNA + AMP + H(+). Functionally, required for the formation of a threonylcarbamoyl group on adenosine at position 37 (t(6)A37) in tRNAs that read codons beginning with adenine. Is involved in the transfer of the threonylcarbamoyl moiety of threonylcarbamoyl-AMP (TC-AMP) to the N6 group of A37, together with TsaE and TsaB. TsaD likely plays a direct catalytic role in this reaction. This Actinobacillus succinogenes (strain ATCC 55618 / DSM 22257 / CCUG 43843 / 130Z) protein is tRNA N6-adenosine threonylcarbamoyltransferase.